A 504-amino-acid polypeptide reads, in one-letter code: Lysine--tRNA ligase (504 aa).

The Mg(2+) site is built by glutamate 411 and glutamate 418.

The protein belongs to the class-II aminoacyl-tRNA synthetase family. In terms of assembly, homodimer. The cofactor is Mg(2+).

The protein resides in the cytoplasm. It catalyses the reaction tRNA(Lys) + L-lysine + ATP = L-lysyl-tRNA(Lys) + AMP + diphosphate. This is Lysine--tRNA ligase from Clostridium botulinum (strain ATCC 19397 / Type A).